A 1174-amino-acid chain; its full sequence is Nucleolar complex protein 1 (1174 aa).

Disordered regions lie at residues 1–20, 29–237, 715–742, 893–922, 944–1085, and 1116–1174; these read MPAAVATGVQFGGPPKNKKI, VVKQ…EESQ, YEDVKDEADDTKDSNPLEEKADNDVKSS, AQNKKQKEIKKDAAEEGDDGEAGEEYLKEG, GVDE…GGRS, and VKGQ…KRKH. Over residues 33–63 the composition is skewed to basic and acidic residues; it reads NKKEHPQRPKFEGKEQVKKPQKIKFGEDGKA. The segment covering 95–104 has biased composition (polar residues); that stretch reads ASKSFNQNHK. Basic and acidic residues-rich tracts occupy residues 113–122 and 176–200; these read KFGEDREAVH and KFGDDGESKENFKKPQRIKFDEDGA. Composition is skewed to acidic residues over residues 207 to 216 and 715 to 724; these read SDGDSDEELG and YEDVKDEADD. Composition is skewed to basic and acidic residues over residues 725–739 and 897–906; these read TKDSNPLEEKADNDV and KQKEIKKDAA. Composition is skewed to acidic residues over residues 907 to 916, 945 to 954, 981 to 1038, and 1048 to 1065; these read EEGDDGEAGE, VDEEQDEEEL, AEDE…DEGS, and DSSDAPESPDEEDDDDED. Basic and acidic residues predominate over residues 1127 to 1143; it reads NKDKSSDKQLKWEENRR. Positions 1156-1166 are enriched in low complexity; that stretch reads GKPAAKGGRPQ.

The protein belongs to the CBF/MAK21 family.

It localises to the nucleus. The protein localises to the nucleolus. Its function is as follows. Involved in rRNA processing and ribosome maturation. May also act as a transcription factor. In Drosophila melanogaster (Fruit fly), this protein is Nucleolar complex protein 1.